The sequence spans 500 residues: Glycerol kinase (500 aa).

Thr12 lines the ADP pocket. Thr12, Thr13, and Ser14 together coordinate ATP. Thr12 lines the sn-glycerol 3-phosphate pocket. Arg16 contributes to the ADP binding site. Sn-glycerol 3-phosphate is bound by residues Arg82, Glu83, Tyr134, and Asp246. Positions 82, 83, 134, 246, and 247 each coordinate glycerol. Residues Thr268 and Gly312 each contribute to the ADP site. ATP is bound by residues Thr268, Gly312, Gln316, and Gly413. The ADP site is built by Gly413 and Asn417.

Belongs to the FGGY kinase family.

The catalysed reaction is glycerol + ATP = sn-glycerol 3-phosphate + ADP + H(+). It functions in the pathway polyol metabolism; glycerol degradation via glycerol kinase pathway; sn-glycerol 3-phosphate from glycerol: step 1/1. Its activity is regulated as follows. Inhibited by fructose 1,6-bisphosphate (FBP). Functionally, key enzyme in the regulation of glycerol uptake and metabolism. Catalyzes the phosphorylation of glycerol to yield sn-glycerol 3-phosphate. This Saccharopolyspora erythraea (strain ATCC 11635 / DSM 40517 / JCM 4748 / NBRC 13426 / NCIMB 8594 / NRRL 2338) protein is Glycerol kinase.